The chain runs to 93 residues: Exodeoxyribonuclease 7 small subunit (93 aa).

Positions 1 to 22 are disordered; it reads MAKTASPGATPPGNGAEPLPDN.

It belongs to the XseB family. Heterooligomer composed of large and small subunits.

The protein localises to the cytoplasm. The enzyme catalyses Exonucleolytic cleavage in either 5'- to 3'- or 3'- to 5'-direction to yield nucleoside 5'-phosphates.. Bidirectionally degrades single-stranded DNA into large acid-insoluble oligonucleotides, which are then degraded further into small acid-soluble oligonucleotides. The polypeptide is Exodeoxyribonuclease 7 small subunit (Burkholderia multivorans (strain ATCC 17616 / 249)).